Here is a 453-residue protein sequence, read N- to C-terminus: Serine/threonine-protein phosphatase 2A regulatory subunit B'' subunit gamma (453 aa).

EF-hand domains are found at residues 273 to 308 and 341 to 376; these read PSAL…TMTN and KEPA…IQEL. Ca(2+) contacts are provided by Asp286, Asp288, Asn290, Met292, and Glu297.

In terms of assembly, interacts with MCM3AP/GANP, PPP5C, and the phosphatase 2A core enzyme composed of the PPP2CA catalytic subunit and the constant regulatory subunit PPP2R1A. Finds in a complex with ABCB1, TFPI2 and PPP2R3C; leading to the dephosphorylation of ABCB1.

It is found in the nucleus. It localises to the cytoplasm. May regulate MCM3AP phosphorylation through phosphatase recruitment. May act as a negative regulator of ABCB1 expression and function through the dephosphorylation of ABCB1 by TFPI2/PPP2R3C complex. May play a role in the activation-induced cell death of B-cells. The polypeptide is Serine/threonine-protein phosphatase 2A regulatory subunit B'' subunit gamma (PPP2R3C) (Bos taurus (Bovine)).